The chain runs to 521 residues: Glutamate--cysteine ligase (521 aa).

It belongs to the glutamate--cysteine ligase type 1 family. Type 1 subfamily.

The catalysed reaction is L-cysteine + L-glutamate + ATP = gamma-L-glutamyl-L-cysteine + ADP + phosphate + H(+). The protein operates within sulfur metabolism; glutathione biosynthesis; glutathione from L-cysteine and L-glutamate: step 1/2. The polypeptide is Glutamate--cysteine ligase (Aliivibrio fischeri (strain MJ11) (Vibrio fischeri)).